Here is a 313-residue protein sequence, read N- to C-terminus: Protoheme IX farnesyltransferase (313 aa).

8 consecutive transmembrane segments (helical) span residues 34–54 (VIEL…RGTV), 56–76 (PLLI…ANTL), 105–125 (HALI…WWTT), 128–148 (LSAH…TLVL), 152–172 (TSQN…IGWS), 173–193 (AVTG…FFWT), 243–263 (LALA…TWFL), and 291–311 (YLAV…PTLF).

This sequence belongs to the UbiA prenyltransferase family. Protoheme IX farnesyltransferase subfamily.

The protein localises to the cell membrane. It catalyses the reaction heme b + (2E,6E)-farnesyl diphosphate + H2O = Fe(II)-heme o + diphosphate. It functions in the pathway porphyrin-containing compound metabolism; heme O biosynthesis; heme O from protoheme: step 1/1. Its function is as follows. Converts heme B (protoheme IX) to heme O by substitution of the vinyl group on carbon 2 of heme B porphyrin ring with a hydroxyethyl farnesyl side group. The sequence is that of Protoheme IX farnesyltransferase from Mycolicibacterium vanbaalenii (strain DSM 7251 / JCM 13017 / BCRC 16820 / KCTC 9966 / NRRL B-24157 / PYR-1) (Mycobacterium vanbaalenii).